The following is a 37-amino-acid chain: Rugosin-C (37 aa).

An intrachain disulfide couples Cys31 to Cys37.

Belongs to the frog skin active peptide (FSAP) family. Brevinin subfamily. In terms of tissue distribution, expressed by the skin glands.

Its subcellular location is the secreted. Has antibacterial activity against Gram-positive bacteria. The chain is Rugosin-C from Glandirana rugosa (Japanese wrinkled frog).